The chain runs to 100 residues: UPF0213 protein YhbQ (100 aa).

The 76-residue stretch at 2–77 (TPWFLYLIRT…KQLTKRQKER (76 aa)) folds into the GIY-YIG domain.

This sequence belongs to the UPF0213 family.

The polypeptide is UPF0213 protein YhbQ (Escherichia coli O157:H7).